We begin with the raw amino-acid sequence, 322 residues long: Ras-like protein 2 (322 aa).

GTP-binding positions include 20–25 (GVGKSA), 36–42 (VDEYDPT), 66–67 (AG), and 123–126 (NKSD). Residues 39-47 (YDPTIEDSY) carry the Effector region motif. Residue lysine 131 forms a Glycyl lysine isopeptide (Lys-Gly) (interchain with G-Cter in ubiquitin) linkage. GTP is bound at residue 153–155 (SAK). The tract at residues 178–322 (YNKTLTENDN…SGSGGCCIIS (145 aa)) is disordered. Positions 180–205 (KTLTENDNSKQTSQDTKGSGANSVPR) are enriched in polar residues. Serine 198, serine 202, serine 207, serine 214, serine 235, and serine 238 each carry phosphoserine. Positions 215–252 (NAANGKNVNSSTTVVNARNASIESKTGLAGNQATNGKT) are enriched in polar residues. Low complexity predominate over residues 261 to 284 (NSTGQAGQANAQSANTVNNRVNNN). Polar residues predominate over residues 285 to 294 (SKAGQVSNAK). Cysteine 318 carries S-palmitoyl cysteine lipidation. Residue cysteine 319 is modified to Cysteine methyl ester. A lipid anchor (S-farnesyl cysteine) is attached at cysteine 319. The propeptide at 320–322 (IIS) is removed in mature form.

The protein belongs to the small GTPase superfamily. Ras family. In terms of processing, farnesylated by RAM1-RAM2, which is required for targeting RAS2 to the cytoplasmic site of the endoplasmic reticulum, where proteolytic processing of the C-terminus by RCE1 and methylation of the resulting carboxyl group by STE14 occurs. Palmitoylated by the ERF2-SHR5 complex, which is required for proper plasma membrane localization of RAS2.

The protein resides in the cell membrane. The catalysed reaction is GTP + H2O = GDP + phosphate + H(+). Its activity is regulated as follows. Alternates between an inactive form bound to GDP and an active form bound to GTP. Activated by guanine nucleotide-exchange factor (GEF) CDC25 and inactivated by GTPase-activating proteins (GAPs) IRA1 and IRA2. Its function is as follows. The S.cerevisiae Ras proteins modulate the activity of the adenylate cyclase catalytic subunit and therefore affect the biosynthesis of cyclic-AMP. This Saccharomyces cerevisiae (strain ATCC 204508 / S288c) (Baker's yeast) protein is Ras-like protein 2 (RAS2).